The following is a 91-amino-acid chain: Acylphosphatase (91 aa).

One can recognise an Acylphosphatase-like domain in the interval Arg-5 to Arg-91. Active-site residues include Arg-20 and Asn-38.

This sequence belongs to the acylphosphatase family.

It catalyses the reaction an acyl phosphate + H2O = a carboxylate + phosphate + H(+). The polypeptide is Acylphosphatase (acyP) (Thermobifida fusca (strain YX)).